Consider the following 415-residue polypeptide: Serine hydroxymethyltransferase (415 aa).

(6S)-5,6,7,8-tetrahydrofolate is bound by residues leucine 117 and 121–123; that span reads GHL. Lysine 226 carries the N6-(pyridoxal phosphate)lysine modification. Glutamate 241 contributes to the (6S)-5,6,7,8-tetrahydrofolate binding site.

The protein belongs to the SHMT family. As to quaternary structure, homodimer. Pyridoxal 5'-phosphate serves as cofactor.

Its subcellular location is the cytoplasm. The enzyme catalyses (6R)-5,10-methylene-5,6,7,8-tetrahydrofolate + glycine + H2O = (6S)-5,6,7,8-tetrahydrofolate + L-serine. It functions in the pathway one-carbon metabolism; tetrahydrofolate interconversion. It participates in amino-acid biosynthesis; glycine biosynthesis; glycine from L-serine: step 1/1. Catalyzes the reversible interconversion of serine and glycine with tetrahydrofolate (THF) serving as the one-carbon carrier. This reaction serves as the major source of one-carbon groups required for the biosynthesis of purines, thymidylate, methionine, and other important biomolecules. Also exhibits THF-independent aldolase activity toward beta-hydroxyamino acids, producing glycine and aldehydes, via a retro-aldol mechanism. In Bacillus velezensis (strain DSM 23117 / BGSC 10A6 / LMG 26770 / FZB42) (Bacillus amyloliquefaciens subsp. plantarum), this protein is Serine hydroxymethyltransferase.